The chain runs to 404 residues: Subtilisin-like proteinase Mp1 (404 aa).

The signal sequence occupies residues 1–19; it reads MVGFKTLALHLAAVLPALA. The propeptide occupies 20-112; the sequence is APVDKQATQV…VEPDQVWDLY (93 aa). Residues 33-111 form the Inhibitor I9 domain; sequence SYIITLKQGA…FVEPDQVWDL (79 aa). The region spanning 121 to 404 is the Peptidase S8 domain; sequence PWGLGSISHR…NLIAFNGVTA (284 aa). The N-linked (GlcNAc...) asparagine glycan is linked to Asn-133. Residues Asp-154, His-186, and Ser-347 each act as charge relay system in the active site.

This sequence belongs to the peptidase S8 family.

It is found in the secreted. In Magnaporthiopsis poae (Kentucky bluegrass fungus), this protein is Subtilisin-like proteinase Mp1.